A 134-amino-acid chain; its full sequence is MGKDTIADIITSIRNADMNRKGTIQIGSTNITENIVQILLREGFIDNVRKHRERNKYFLVLTLRHRRNRKGPHRTILNLRRISRPGLRIYSNYQQIPRILGGMGIVILSTSRGIMTDREARLEGIGGEILCYIW.

This sequence belongs to the universal ribosomal protein uS8 family. Part of the 30S ribosomal subunit.

It localises to the plastid. It is found in the chloroplast. Its function is as follows. One of the primary rRNA binding proteins, it binds directly to 16S rRNA central domain where it helps coordinate assembly of the platform of the 30S subunit. In Gossypium barbadense (Sea Island cotton), this protein is Small ribosomal subunit protein uS8c (rps8).